Consider the following 227-residue polypeptide: PKHD-type hydroxylase Bphy_5374 (227 aa).

In terms of domain architecture, Fe2OG dioxygenase spans 79 to 179 (KVYPPLFNRY…RVASFFWVQS (101 aa)). Residues histidine 97, aspartate 99, and histidine 160 each contribute to the Fe cation site. A 2-oxoglutarate-binding site is contributed by arginine 170.

Fe(2+) is required as a cofactor. It depends on L-ascorbate as a cofactor.

The polypeptide is PKHD-type hydroxylase Bphy_5374 (Paraburkholderia phymatum (strain DSM 17167 / CIP 108236 / LMG 21445 / STM815) (Burkholderia phymatum)).